The sequence spans 479 residues: ATP synthase subunit beta (479 aa).

153-160 provides a ligand contact to ATP; it reads GGAGVGKT.

The protein belongs to the ATPase alpha/beta chains family. As to quaternary structure, F-type ATPases have 2 components, CF(1) - the catalytic core - and CF(0) - the membrane proton channel. CF(1) has five subunits: alpha(3), beta(3), gamma(1), delta(1), epsilon(1). CF(0) has three main subunits: a(1), b(2) and c(9-12). The alpha and beta chains form an alternating ring which encloses part of the gamma chain. CF(1) is attached to CF(0) by a central stalk formed by the gamma and epsilon chains, while a peripheral stalk is formed by the delta and b chains.

It is found in the cell membrane. The enzyme catalyses ATP + H2O + 4 H(+)(in) = ADP + phosphate + 5 H(+)(out). Functionally, produces ATP from ADP in the presence of a proton gradient across the membrane. The catalytic sites are hosted primarily by the beta subunits. This is ATP synthase subunit beta from Lactobacillus delbrueckii subsp. bulgaricus (strain ATCC BAA-365 / Lb-18).